Reading from the N-terminus, the 666-residue chain is MDIEPTFKGYIEDEDDALLILQATLDGKLKHIPRRPYEIERPYLIVSGSIFVFIEEISGIKRWTDGVSWSPSRISGKFLIYKELDKENAGSNANATSSGSTDSAVITDGTSGARNNPSSSKIKLPPLKNHQFDLPPTMGHSSFESEQDTSISPSNRSNLPLKYTGLVKKTISVKLKRPPFNSIENLHIVSYYSVKDIKQNCLVTPKASPFLKDVRPSQELIVAMGNTTLGNVKNNSTTTGNGPNNINNKSNSSTPLNTVISTNNNSANINAAGSNQFTSANKNYYYKNDESSGYPITQFAPALPSTTLMYTANPPYITQSPDNTNATGMNTHVNNNNNNSNNSSNSNNSNNNNNNNNNNNNNNNNNINNINNVNTNAGNGNNPNRFHNASFAYNTTGDFINPQQQGQISYPFYYTTIPINNPNYYTTQPPNPVTNASTNENQGYSTSSTQHPYYGHPTESQSASAAAGATGTPGTAENVLPVSSMQPLLHQANNNSASSATSTAPYPVYSMNVNVPYYNSSASAYKRAQENTTSNTNAEPSGATSTNSGTMLSNPAYANSQYTPSQVYYQGFPQYAMASAQNPSMYQHQHQHPLPTVYPIATPQQNIMSSGHTLSTIGSDPQHHHYQQEPNDHKNFAMGHANNNILNITNNDTMNNLNTNTSTTTQ.

Positions 90 to 104 are enriched in low complexity; it reads GSNANATSSGSTDSA. Disordered regions lie at residues 90–157, 232–254, 314–389, 425–479, and 528–552; these read GSNA…SNRS, VKNN…NSST, PPYI…FHNA, YTTQ…AENV, and AQEN…GTML. 2 stretches are compositionally biased toward polar residues: residues 108 to 121 and 139 to 157; these read DGTS…SSSK and GHSS…SNRS. Position 152 is a phosphoserine (serine 152). Over residues 233 to 254 the composition is skewed to low complexity; the sequence is KNNSTTTGNGPNNINNKSNSST. A compositionally biased stretch (polar residues) spans 314–333; sequence PPYITQSPDNTNATGMNTHV. The segment covering 334–384 has biased composition (low complexity); it reads NNNNNNSNNSSNSNNSNNNNNNNNNNNNNNNNNINNINNVNTNAGNGNNPN. The span at 436-451 shows a compositional bias: polar residues; sequence ASTNENQGYSTSSTQH. Positions 460–476 are enriched in low complexity; sequence SQSASAAAGATGTPGTA. Residues 530-552 show a composition bias toward polar residues; it reads ENTTSNTNAEPSGATSTNSGTML.

The protein belongs to the MIT1/WOR1 family.

The protein resides in the cytoplasm. Its subcellular location is the nucleus. Transcriptional regulator of pseudohyphal growth. This is Transcriptional regulator MIT1 (MIT1) from Saccharomyces cerevisiae (strain ATCC 204508 / S288c) (Baker's yeast).